The following is a 416-amino-acid chain: uncharacterized protein (416 aa).

A disordered region spans residues 341 to 360 (EDREKGSQHTNNTHHHKRNL).

This is an uncharacterized protein from Human cytomegalovirus (strain AD169) (HHV-5).